The following is a 367-amino-acid chain: MTVGIVEEKSITFQTDLRLESGRILGPITIAYETYGILNADRSNAIMVTHAWTGSAHLAGRYCESEQKPGWWNEIVGPGKLLDTNRYFVICSNVIGSCFGSTGPASINPKTGKKYALTFPVITVRDMVRAQALLIDHLGIERLHAVMGGSMGGMQALEWATQFPDRIASAVILATTPRPSAQAISLNAVARWAIFNDPTWKKGEYRKNPRDGLALARGIGHITFLSDESMTAKFGRRFSAKDGQFDFFGQFEVERYLNYNGYNFVDRFDTNAFLYLAKALDLYDVAWGYESLEEAFAQVKAPMQFFAFSSDWLYPPPQTEEMVRMLKKLGKPVEYHLINSAYGHDAFLLEHETFTPMVRDFLKKAGA.

Residues 44-350 (NAIMVTHAWT…AYGHDAFLLE (307 aa)) enclose the AB hydrolase-1 domain. The active-site Nucleophile is the Ser150. Arg217 is a substrate binding site. Residues Asp311 and His344 contribute to the active site. Asp345 contacts substrate.

The protein belongs to the AB hydrolase superfamily. MetX family. In terms of assembly, homodimer.

It localises to the cytoplasm. It carries out the reaction L-homoserine + acetyl-CoA = O-acetyl-L-homoserine + CoA. It functions in the pathway amino-acid biosynthesis; L-methionine biosynthesis via de novo pathway; O-acetyl-L-homoserine from L-homoserine: step 1/1. In terms of biological role, transfers an acetyl group from acetyl-CoA to L-homoserine, forming acetyl-L-homoserine. The chain is Homoserine O-acetyltransferase from Geotalea daltonii (strain DSM 22248 / JCM 15807 / FRC-32) (Geobacter daltonii).